The chain runs to 345 residues: Phosphate acyltransferase (345 aa).

The protein belongs to the PlsX family. In terms of assembly, homodimer. Probably interacts with PlsY.

It is found in the cytoplasm. The enzyme catalyses a fatty acyl-[ACP] + phosphate = an acyl phosphate + holo-[ACP]. Its pathway is lipid metabolism; phospholipid metabolism. Catalyzes the reversible formation of acyl-phosphate (acyl-PO(4)) from acyl-[acyl-carrier-protein] (acyl-ACP). This enzyme utilizes acyl-ACP as fatty acyl donor, but not acyl-CoA. The chain is Phosphate acyltransferase from Dichelobacter nodosus (strain VCS1703A).